A 500-amino-acid chain; its full sequence is Glycerol kinase (500 aa).

Residue Thr-16 participates in ADP binding. Positions 16 and 17 each coordinate ATP. Position 16 (Thr-16) interacts with sn-glycerol 3-phosphate. An ADP-binding site is contributed by Arg-20. Sn-glycerol 3-phosphate-binding residues include Arg-86, Glu-87, Tyr-138, and Asp-243. Positions 86, 87, 138, 243, and 244 each coordinate glycerol. ADP contacts are provided by Thr-265 and Gly-313. Residues Thr-265, Gly-313, Gln-317, and Gly-414 each coordinate ATP. 2 residues coordinate ADP: Gly-414 and Asn-418.

It belongs to the FGGY kinase family.

The catalysed reaction is glycerol + ATP = sn-glycerol 3-phosphate + ADP + H(+). It participates in polyol metabolism; glycerol degradation via glycerol kinase pathway; sn-glycerol 3-phosphate from glycerol: step 1/1. With respect to regulation, inhibited by fructose 1,6-bisphosphate (FBP). Its function is as follows. Key enzyme in the regulation of glycerol uptake and metabolism. Catalyzes the phosphorylation of glycerol to yield sn-glycerol 3-phosphate. In Trichormus variabilis (strain ATCC 29413 / PCC 7937) (Anabaena variabilis), this protein is Glycerol kinase.